Consider the following 491-residue polypeptide: Cobyric acid synthase (491 aa).

The GATase cobBQ-type domain maps to 250–437 (RLRVVVPVLP…LHGIFDHPAA (188 aa)). C331 serves as the catalytic Nucleophile. Residue H429 is part of the active site.

Belongs to the CobB/CobQ family. CobQ subfamily.

Its pathway is cofactor biosynthesis; adenosylcobalamin biosynthesis. Its function is as follows. Catalyzes amidations at positions B, D, E, and G on adenosylcobyrinic A,C-diamide. NH(2) groups are provided by glutamine, and one molecule of ATP is hydrogenolyzed for each amidation. The polypeptide is Cobyric acid synthase (Xanthomonas campestris pv. campestris (strain B100)).